A 130-amino-acid chain; its full sequence is Large ribosomal subunit protein bL12 (130 aa).

This sequence belongs to the bacterial ribosomal protein bL12 family. As to quaternary structure, homodimer. Part of the ribosomal stalk of the 50S ribosomal subunit. Forms a multimeric L10(L12)X complex, where L10 forms an elongated spine to which 2 to 4 L12 dimers bind in a sequential fashion. Binds GTP-bound translation factors.

In terms of biological role, forms part of the ribosomal stalk which helps the ribosome interact with GTP-bound translation factors. Is thus essential for accurate translation. The sequence is that of Large ribosomal subunit protein bL12 from Mycolicibacterium gilvum (strain PYR-GCK) (Mycobacterium gilvum (strain PYR-GCK)).